The primary structure comprises 528 residues: MSQTSLKKERDPSILILDFGSQYSELIARRIRETNVFSLVVSNCISIKEINNINPKGIILSGGPNSVYEQNAPKCDEKIFNLGIPILGICYGMQLMVKELGGSVIPATKKAEYGRAPINIDQESDLLSDVQDKSIMWMSHGDSIKCLPVGFNKIAHTENTLHAAISNDLKKLFGVQFHPEVIHSEYGMTVIKNFVYKISCCAADWTTETYIEETIPRIREQVGNKKVLLALSGGVDSSTLAFLLNKAIGNQLTCMFIDQGFMRKGEPEFLMNFFDKKFHIKVEYINARKRFISKLKGITEPEQKRKIIGEEFIRVFEEESNRLGPFQYLAQGTLYPDVIESAGTNIDPKTGERIAVKIKSHHNVGGLPKDLQFKLVEPLRKLFKDEVRQVGAALGLPAEIIKRHPFPGPGLAIRILGEVNNEKLDCLRDADWIVRDEIKKAGLYNEIWQAFAVLLPVKTVGVMGDKRTYAWPIVLRCVSSEDGMTADWSKIPFKILERIANRIVNEVISVNRVVYDITSKPPGTIEWE.

One can recognise a Glutamine amidotransferase type-1 domain in the interval 13–204; that stretch reads SILILDFGSQ…VYKISCCAAD (192 aa). The active-site Nucleophile is the C90. Residues H178 and E180 contribute to the active site. In terms of domain architecture, GMPS ATP-PPase spans 205–403; sequence WTTETYIEET…LGLPAEIIKR (199 aa). 232–238 contributes to the ATP binding site; that stretch reads SGGVDSS.

In terms of assembly, homodimer.

It carries out the reaction XMP + L-glutamine + ATP + H2O = GMP + L-glutamate + AMP + diphosphate + 2 H(+). It participates in purine metabolism; GMP biosynthesis; GMP from XMP (L-Gln route): step 1/1. Functionally, catalyzes the synthesis of GMP from XMP. The protein is GMP synthase [glutamine-hydrolyzing] of Prochlorococcus marinus (strain MIT 9215).